Reading from the N-terminus, the 507-residue chain is Protein DETOXIFICATION 41 (507 aa).

The Cytoplasmic segment spans residues 1–62 (MSSTETYEPL…KLLWTLSGAS (62 aa)). A helical transmembrane segment spans residues 63–83 (IVVSVLNYMLSFVTVMFTGHL). Residues 84–92 (GSLQLAGAS) lie on the Vacuolar side of the membrane. Residues 93-113 (IATVGIQGLAYGIMLGMASAV) form a helical membrane-spanning segment. The Cytoplasmic portion of the chain corresponds to 114 to 137 (QTVCGQAYGARQYSSMGIICQRAM). The helical transmembrane segment at 138 to 158 (VLHLAAAVFLTFLYWYSGPIL) threads the bilayer. At 159–170 (KTMGQSVAIAHE) the chain is on the vacuolar side. The helical transmembrane segment at 171 to 191 (GQIFARGMIPQIYAFALACPM) threads the bilayer. Residues 192-202 (QRFLQAQNIVN) lie on the Cytoplasmic side of the membrane. A helical membrane pass occupies residues 203-223 (PLAYMSLGVFLLHTLLTWLVT). Asn-224 is a topological domain (vacuolar). A helical transmembrane segment spans residues 225-245 (VLDFGLLGAALILSFSWWLLV). The Cytoplasmic portion of the chain corresponds to 246–283 (AVNGMYILMSPNCKETWTGFSTRAFRGIWPYFKLTVAS). The helical transmembrane segment at 284–304 (AVMLCLEIWYNQGLVIISGLL) threads the bilayer. Over 305–312 (SNPTISLD) the chain is Vacuolar. A helical membrane pass occupies residues 313–333 (AISICMYYLNWDMQFMLGLSA). The Cytoplasmic segment spans residues 334-355 (AISVRVSNELGAGNPRVAMLSV). A helical membrane pass occupies residues 356-376 (VVVNITTVLISSVLCVIVLVF). The Vacuolar segment spans residues 377–389 (RVGLSKAFTSDAE). A helical transmembrane segment spans residues 390–410 (VIAAVSDLFPLLAVSIFLNGI). Residues 411–425 (QPILSGVAIGSGWQA) are Cytoplasmic-facing. The helical transmembrane segment at 426–446 (VVAYVNLVTYYVIGLPIGCVL) threads the bilayer. Residues 447–453 (GFKTSLG) are Vacuolar-facing. A helical transmembrane segment spans residues 454 to 474 (VAGIWWGMIAGVILQTLTLIV). At 475 to 507 (LTLKTNWTSEVENAAQRVKTSATENQEMANAGV) the chain is on the cytoplasmic side.

Belongs to the multi antimicrobial extrusion (MATE) (TC 2.A.66.1) family. In terms of tissue distribution, expressed in reproductive tissues, from buds to siliques. Restricted to the endothelium layer of the ovule and the seed coat.

The protein localises to the vacuole membrane. Its pathway is secondary metabolite biosynthesis; flavonoid biosynthesis. Functionally, acts as a flavonoid/H(+)-antiporter that control the vacuolar sequestration of flavonoids in the seed coat endothelium. Could transport the anthocyanin cyanidin-3-O-glucoside and epicatechin 3'-O-glucoside in vitro. The protein is Protein DETOXIFICATION 41 of Arabidopsis thaliana (Mouse-ear cress).